Reading from the N-terminus, the 257-residue chain is Protein LigF (257 aa).

The 82-residue stretch at 1–82 (MTLKLYSFGP…YLEDVFPESG (82 aa)) folds into the GST N-terminal domain. Residues 89-257 (DPFKRAEMRV…LLKRQNEKVA (169 aa)) enclose the GST C-terminal domain.

It belongs to the GST superfamily.

Its function is as follows. Lignin degradation enzyme. This is Protein LigF (ligF) from Sphingobium sp. (strain NBRC 103272 / SYK-6).